We begin with the raw amino-acid sequence, 394 residues long: Probable acetyl-CoA acyltransferase (394 aa).

The active-site Acyl-thioester intermediate is C88. Catalysis depends on proton acceptor residues H349 and C378.

This sequence belongs to the thiolase-like superfamily. Thiolase family.

It localises to the cytoplasm. The enzyme catalyses 2 acetyl-CoA = acetoacetyl-CoA + CoA. The polypeptide is Probable acetyl-CoA acyltransferase (Staphylococcus epidermidis (strain ATCC 35984 / DSM 28319 / BCRC 17069 / CCUG 31568 / BM 3577 / RP62A)).